A 195-amino-acid chain; its full sequence is ATP-dependent Clp protease proteolytic subunit (195 aa).

Residue S98 is the Nucleophile of the active site. The active site involves H123.

Belongs to the peptidase S14 family. Fourteen ClpP subunits assemble into 2 heptameric rings which stack back to back to give a disk-like structure with a central cavity, resembling the structure of eukaryotic proteasomes.

The protein resides in the cytoplasm. It catalyses the reaction Hydrolysis of proteins to small peptides in the presence of ATP and magnesium. alpha-casein is the usual test substrate. In the absence of ATP, only oligopeptides shorter than five residues are hydrolyzed (such as succinyl-Leu-Tyr-|-NHMec, and Leu-Tyr-Leu-|-Tyr-Trp, in which cleavage of the -Tyr-|-Leu- and -Tyr-|-Trp bonds also occurs).. Cleaves peptides in various proteins in a process that requires ATP hydrolysis. Has a chymotrypsin-like activity. Plays a major role in the degradation of misfolded proteins. This Thermoanaerobacter pseudethanolicus (strain ATCC 33223 / 39E) (Clostridium thermohydrosulfuricum) protein is ATP-dependent Clp protease proteolytic subunit.